Here is a 145-residue protein sequence, read N- to C-terminus: Ribosomal RNA large subunit methyltransferase H (145 aa).

S-adenosyl-L-methionine is bound by residues leucine 64, glycine 93, and 112 to 117 (LSALTF).

It belongs to the RNA methyltransferase RlmH family. In terms of assembly, homodimer.

It localises to the cytoplasm. It catalyses the reaction pseudouridine(1915) in 23S rRNA + S-adenosyl-L-methionine = N(3)-methylpseudouridine(1915) in 23S rRNA + S-adenosyl-L-homocysteine + H(+). In terms of biological role, specifically methylates the pseudouridine at position 1915 (m3Psi1915) in 23S rRNA. This is Ribosomal RNA large subunit methyltransferase H from Prochlorococcus marinus (strain SARG / CCMP1375 / SS120).